Here is a 67-residue protein sequence, read N- to C-terminus: Beta-defensin 110 (67 aa).

The first 19 residues, 1–19 (MKIQLFFFILLFWVTILPA), serve as a signal peptide directing secretion. Disulfide bonds link Cys-35/Cys-63, Cys-42/Cys-56, and Cys-46/Cys-64.

This sequence belongs to the beta-defensin family.

The protein localises to the secreted. Its function is as follows. Has antibacterial activity. The sequence is that of Beta-defensin 110 (DEFB110) from Pan troglodytes (Chimpanzee).